A 355-amino-acid chain; its full sequence is Peptide chain release factor 1 (355 aa).

The residue at position 230 (Gln230) is an N5-methylglutamine.

It belongs to the prokaryotic/mitochondrial release factor family. In terms of processing, methylated by PrmC. Methylation increases the termination efficiency of RF1.

It is found in the cytoplasm. Functionally, peptide chain release factor 1 directs the termination of translation in response to the peptide chain termination codons UAG and UAA. In Geobacter metallireducens (strain ATCC 53774 / DSM 7210 / GS-15), this protein is Peptide chain release factor 1.